The chain runs to 246 residues: ATP synthase subunit a (246 aa).

Residues 1 to 3 (MIY) constitute a propeptide, removed in mature form. 7 consecutive transmembrane segments (helical) span residues 25 to 45 (VNNYVMYVALVVTLMYSSVFL), 51 to 71 (LGFNRWGVALLAVYDTILNMV), 79 to 99 (GGMYFPFMFTLFTFMLVANLV), 112 to 132 (LVAIVSFSLSLWFGCVLMGLS), 138 to 158 (FFALFVPGGTPLALVPVLVLI), 178 to 198 (VLSGHLLMLILGTLMFNLMGS), and 203 to 223 (FMGGFMPVMGVIAIVVTEFAI).

It belongs to the ATPase A chain family. In terms of assembly, F-type ATPases have 2 components, CF(1) - the catalytic core - and CF(0) - the membrane proton channel. CF(1) has five subunits: alpha(3), beta(3), gamma(1), delta(1), epsilon(1). CF(0) has three main subunits: a, b and c.

It localises to the mitochondrion inner membrane. In terms of biological role, mitochondrial membrane ATP synthase (F(1)F(0) ATP synthase or Complex V) produces ATP from ADP in the presence of a proton gradient across the membrane which is generated by electron transport complexes of the respiratory chain. F-type ATPases consist of two structural domains, F(1) - containing the extramembraneous catalytic core and F(0) - containing the membrane proton channel, linked together by a central stalk and a peripheral stalk. During catalysis, ATP synthesis in the catalytic domain of F(1) is coupled via a rotary mechanism of the central stalk subunits to proton translocation. Key component of the proton channel; it may play a direct role in the translocation of protons across the membrane. This is ATP synthase subunit a (ATP6) from Debaryomyces hansenii (strain ATCC 36239 / CBS 767 / BCRC 21394 / JCM 1990 / NBRC 0083 / IGC 2968) (Yeast).